We begin with the raw amino-acid sequence, 78 residues long: Large ribosomal subunit protein bL28 (78 aa).

The segment at M1–P31 is disordered.

The protein belongs to the bacterial ribosomal protein bL28 family.

The protein is Large ribosomal subunit protein bL28 of Pseudarthrobacter chlorophenolicus (strain ATCC 700700 / DSM 12829 / CIP 107037 / JCM 12360 / KCTC 9906 / NCIMB 13794 / A6) (Arthrobacter chlorophenolicus).